The primary structure comprises 488 residues: Splicing factor U2AF 65 kDa subunit (488 aa).

Composition is skewed to basic and acidic residues over residues 25-55 (LESL…DEDR) and 78-129 (DRRD…KYRF). The segment at 25 to 133 (LESLQEDVKP…PKKYRFWDVP (109 aa)) is disordered. RRM domains lie at 175–257 (RRLY…RPRD), 282–359 (NKIF…LACA), and 389–479 (EILC…YYDV).

The protein belongs to the splicing factor SR family. As to quaternary structure, forms a heterodimer with the U2AF small subunit.

It is found in the nucleus. Necessary for the splicing of pre-mRNA. Binds to the polypyrimidine tract of introns early during spliceosome assembly. The chain is Splicing factor U2AF 65 kDa subunit (uaf-1) from Caenorhabditis briggsae.